We begin with the raw amino-acid sequence, 325 residues long: 33 kDa chaperonin (325 aa).

Cystine bridges form between Cys-260/Cys-262 and Cys-293/Cys-296.

It belongs to the HSP33 family. In terms of processing, under oxidizing conditions two disulfide bonds are formed involving the reactive cysteines. Under reducing conditions zinc is bound to the reactive cysteines and the protein is inactive.

It localises to the cytoplasm. Redox regulated molecular chaperone. Protects both thermally unfolding and oxidatively damaged proteins from irreversible aggregation. Plays an important role in the bacterial defense system toward oxidative stress. The polypeptide is 33 kDa chaperonin (Aquifex aeolicus (strain VF5)).